A 333-amino-acid polypeptide reads, in one-letter code: Methionyl-tRNA formyltransferase (333 aa).

Residue 106–109 (SLLP) coordinates (6S)-5,6,7,8-tetrahydrofolate.

Belongs to the Fmt family.

The catalysed reaction is L-methionyl-tRNA(fMet) + (6R)-10-formyltetrahydrofolate = N-formyl-L-methionyl-tRNA(fMet) + (6S)-5,6,7,8-tetrahydrofolate + H(+). Attaches a formyl group to the free amino group of methionyl-tRNA(fMet). The formyl group appears to play a dual role in the initiator identity of N-formylmethionyl-tRNA by promoting its recognition by IF2 and preventing the misappropriation of this tRNA by the elongation apparatus. The polypeptide is Methionyl-tRNA formyltransferase (Elusimicrobium minutum (strain Pei191)).